Reading from the N-terminus, the 228-residue chain is Fluoride-specific ion channel FluC (228 aa).

7 consecutive transmembrane segments (helical) span residues 3–23, 37–57, 72–92, 101–121, 141–161, 172–192, and 202–222; these read LSLFAIALGGAAGALARFWVS, GTLFINVSGSFLMGFLSVMMI, VGFLGAYTTFSTFSLETLALF, ALNVLLSVVLCLAAVWVGAVL, IFGAACGMSLLAGFAAALAFA, LVLVALTGLVVVGTLVALVVT, and LWGAFTLSAFAAVVFLSLGLV. 2 residues coordinate Na(+): Gly76 and Thr79.

This sequence belongs to the fluoride channel Fluc/FEX (TC 1.A.43) family.

The protein resides in the cell inner membrane. It catalyses the reaction fluoride(in) = fluoride(out). Na(+) is not transported, but it plays an essential structural role and its presence is essential for fluoride channel function. Fluoride-specific ion channel. Important for reducing fluoride concentration in the cell, thus reducing its toxicity. This chain is Fluoride-specific ion channel FluC, found in Methylococcus capsulatus (strain ATCC 33009 / NCIMB 11132 / Bath).